Reading from the N-terminus, the 332-residue chain is Heterogeneous nuclear ribonucleoprotein A/B (332 aa).

A disordered region spans residues 1 to 66 (MSEAGEEQPM…DQINASKNEE (66 aa)). Positions 29 to 49 (GRGWTGAAAGAGGATAAPPSG) are enriched in low complexity. RRM domains follow at residues 69-154 (GKMF…PVKK) and 153-233 (KKIF…QPKE). A Phosphoserine modification is found at Ser81. Residues Lys130 and Lys203 each participate in a glycyl lysine isopeptide (Lys-Gly) (interchain with G-Cter in SUMO2) cross-link. At Lys215 the chain carries N6-acetyllysine. The tract at residues 235-268 (YQQQQYGSGGRGNRNRGNRGSGGGGGGGGQSQSW) is disordered. Ser242 is modified (phosphoserine). At Arg245 the chain carries Dimethylated arginine; alternate. The residue at position 245 (Arg245) is an Omega-N-methylarginine; alternate. Omega-N-methylarginine is present on residues Arg250, Gly251, Arg253, and Gly254. A compositionally biased stretch (gly residues) spans 253 to 264 (RGSGGGGGGGGQ). A phosphoserine mark is found at Ser255 and Gly256. 3 positions are modified to N6-acetyllysine: Gly271, Tyr272, and Lys318. Residues 311-332 (QGSTNYGKSQRRGGHQNNYKPY) are disordered. Arg322 is modified (dimethylated arginine; alternate). Position 322 is an omega-N-methylarginine; alternate (Arg322). An Asymmetric dimethylarginine; alternate modification is found at Arg322.

In terms of assembly, identified in a IGF2BP1-dependent mRNP granule complex containing untranslated mRNAs. Interacts with APOBEC1. Dimethylation at Arg-322 is probably asymmetric. As to expression, ubiquitous.

It is found in the nucleus. The protein resides in the cytoplasm. In terms of biological role, binds single-stranded RNA. Has a high affinity for G-rich and U-rich regions of hnRNA. Also binds to APOB mRNA transcripts around the RNA editing site. The protein is Heterogeneous nuclear ribonucleoprotein A/B (HNRNPAB) of Homo sapiens (Human).